Reading from the N-terminus, the 122-residue chain is Large ribosomal subunit protein bL12 (122 aa).

Belongs to the bacterial ribosomal protein bL12 family. As to quaternary structure, homodimer. Part of the ribosomal stalk of the 50S ribosomal subunit. Forms a multimeric L10(L12)X complex, where L10 forms an elongated spine to which 2 to 4 L12 dimers bind in a sequential fashion. Binds GTP-bound translation factors.

In terms of biological role, forms part of the ribosomal stalk which helps the ribosome interact with GTP-bound translation factors. Is thus essential for accurate translation. The chain is Large ribosomal subunit protein bL12 from Shewanella putrefaciens (strain CN-32 / ATCC BAA-453).